The primary structure comprises 284 residues: Putative ABC transporter ATP-binding protein sll0385 (284 aa).

In terms of domain architecture, ABC transporter spans 51–278; the sequence is IRVRELSFAY…QTLMESHGLE (228 aa). Residue 84 to 91 participates in ATP binding; the sequence is GHNGCGKT.

The protein belongs to the ABC transporter superfamily.

Its subcellular location is the cell inner membrane. In terms of biological role, probably part of an ABC transporter complex. Responsible for energy coupling to the transport system. The chain is Putative ABC transporter ATP-binding protein sll0385 from Synechocystis sp. (strain ATCC 27184 / PCC 6803 / Kazusa).